The chain runs to 435 residues: MVDHSAALFNKAQNYMPGGVNSPVRAFGAVGGVPRFIKKASGPYLIDVDEKKYIDYVGSWGPMILGHAHPAVIQAAQEAVQNGLSFGAPCENEIKLAALIGEFMPSIEKVRMVNSGTEATMSALRLARGVTGRSKIIKFEGCYHGHADCLLVNAGSGALTFGMPSSPGVPLGTVQDTLTATFNDLDSVAALFEKYSKDIAAIIVEPIAGNMNLIPAAPDFLTGLRELCNQYGSLLIFDEVITGFRVAKGGAQSLYNIRPDLTALGKIIGGGMPVGAYGGRREIMNQLSPEGPVYQAGTLSGNPVAMAAGLATLKELTAENFYSNLKEKTERLVMGILSRAKAAKIPLTANFSCGIFGLIFTSEERVTRYAQAVNGNVEHFRSFFHKMLDNGVYLAPSAFESGFISAAHTNKEVDNTLDIIENIFSVSETYLRISV.

At Lys-266 the chain carries N6-(pyridoxal phosphate)lysine.

Belongs to the class-III pyridoxal-phosphate-dependent aminotransferase family. HemL subfamily. As to quaternary structure, homodimer. The cofactor is pyridoxal 5'-phosphate.

The protein resides in the cytoplasm. It carries out the reaction (S)-4-amino-5-oxopentanoate = 5-aminolevulinate. Its pathway is porphyrin-containing compound metabolism; protoporphyrin-IX biosynthesis; 5-aminolevulinate from L-glutamyl-tRNA(Glu): step 2/2. In Coxiella burnetii (strain RSA 331 / Henzerling II), this protein is Glutamate-1-semialdehyde 2,1-aminomutase.